Consider the following 359-residue polypeptide: Squamosa promoter-binding-like protein 13A (359 aa).

The tract at residues 75–94 (AKPEGSRSSSSKRTRGNGVG) is disordered. The SBP-type zinc-finger motif lies at 98–175 (MPICLVDGCD…DGHNRRRRKP (78 aa)). Residues C101, C106, C123, H126, C142, C145, H149, and C161 each contribute to the Zn(2+) site. The Bipartite nuclear localization signal motif lies at 158 to 174 (KRSCRKRLDGHNRRRRK).

The cofactor is Zn(2+).

It localises to the nucleus. Its function is as follows. Trans-acting factor that binds specifically to the consensus nucleotide sequence 5'-TNCGTACAA-3'. This Arabidopsis thaliana (Mouse-ear cress) protein is Squamosa promoter-binding-like protein 13A (SPL13A).